A 1092-amino-acid polypeptide reads, in one-letter code: Rho GTPase-activating protein 7 (1092 aa).

Positions Leu-11–Glu-78 constitute an SAM domain. Phosphoserine occurs at positions 86, 89, and 129. 4 disordered regions span residues Pro-121–Thr-179, Arg-297–Leu-330, Gly-409–Ser-434, and Ser-492–Gly-553. Residues Pro-130–Ser-143 show a composition bias toward polar residues. Composition is skewed to low complexity over residues Val-154–Ser-174 and Val-299–Thr-325. The tract at residues Gln-275 to Gly-448 is focal adhesion-targeting (FAT). A Phosphoserine modification is found at Ser-322. Residues Leu-415–Glu-426 show a composition bias toward basic and acidic residues. Residues Ala-500–Lys-512 show a composition bias toward polar residues. Residues Ile-514–Ser-526 show a composition bias toward basic and acidic residues. Positions Asp-527–Asn-536 are enriched in polar residues. The segment at Lys-615–Arg-637 is polybasic cluster (PBR). Residues Val-642–Phe-848 enclose the Rho-GAP domain. The START domain occupies Asn-878–Glu-1085.

As to quaternary structure, interacts with EF1A1, facilitates EF1A1 distribution to the membrane periphery and ruffles upon growth factor stimulation and suppresses cell migration. Interacts with tensin TNS1 (via N-terminus); the interaction is decreased by phosphorylation of TNS1. Interacts with TNS3 and PTEN; in resting cells, interacts with TNS3 (via C2 tensin-type domain) but, following growth factor stimulation, TNS3 and PTEN are phosphorylated which leads to weakened interaction with TNS3 and enhanced interaction with PTEN. Interacts (via C-terminus) with tensin TNS4 (via SH2 domain); the interaction is independent of tyrosine phosphorylation of DLC1. In terms of tissue distribution, widely expressed with the highest levels in heart, liver and lung.

The protein resides in the cytoplasm. Its subcellular location is the cell junction. It is found in the focal adhesion. The protein localises to the membrane. In terms of biological role, functions as a GTPase-activating protein for the small GTPases RHOA, RHOB, RHOC and CDC42, terminating their downstream signaling. This induces morphological changes and detachment through cytoskeletal reorganization, playing a critical role in biological processes such as cell migration and proliferation. Also functions in vivo as an activator of the phospholipase PLCD1. Active DLC1 increases cell migration velocity but reduces directionality. Required for growth factor-induced epithelial cell migration; in resting cells, interacts with TNS3 while PTEN interacts with the p85 regulatory subunit of the PI3K kinase complex but growth factor stimulation induces phosphorylation of TNS3 and PTEN, causing them to change their binding preference so that PTEN interacts with DLC1 and TNS3 interacts with p85. The PTEN-DLC1 complex translocates to the posterior of migrating cells to activate RHOA while the TNS3-p85 complex translocates to the leading edge of migrating cells to promote RAC1 activation. The protein is Rho GTPase-activating protein 7 (Dlc1) of Mus musculus (Mouse).